Here is a 417-residue protein sequence, read N- to C-terminus: Serine hydroxymethyltransferase 3 (417 aa).

(6S)-5,6,7,8-tetrahydrofolate contacts are provided by residues leucine 121 and glycine 125 to leucine 127. Lysine 230 is modified (N6-(pyridoxal phosphate)lysine). Serine 355–phenylalanine 357 is a (6S)-5,6,7,8-tetrahydrofolate binding site.

The protein belongs to the SHMT family. As to quaternary structure, homodimer. Pyridoxal 5'-phosphate serves as cofactor.

Its subcellular location is the cytoplasm. It catalyses the reaction (6R)-5,10-methylene-5,6,7,8-tetrahydrofolate + glycine + H2O = (6S)-5,6,7,8-tetrahydrofolate + L-serine. Its pathway is one-carbon metabolism; tetrahydrofolate interconversion. The protein operates within amino-acid biosynthesis; glycine biosynthesis; glycine from L-serine: step 1/1. In terms of biological role, catalyzes the reversible interconversion of serine and glycine with tetrahydrofolate (THF) serving as the one-carbon carrier. This reaction serves as the major source of one-carbon groups required for the biosynthesis of purines, thymidylate, methionine, and other important biomolecules. Also exhibits THF-independent aldolase activity toward beta-hydroxyamino acids, producing glycine and aldehydes, via a retro-aldol mechanism. The sequence is that of Serine hydroxymethyltransferase 3 from Pseudomonas fluorescens (strain Pf0-1).